A 302-amino-acid polypeptide reads, in one-letter code: ICOS ligand (302 aa).

The signal sequence occupies residues 1–18 (MRLGSPGLLFLLFSSLRA). An Ig-like V-type domain is found at 19 to 129 (DTQEKEVRAM…LGFQEVLSVE (111 aa)). The Extracellular portion of the chain corresponds to 19–256 (DTQEKEVRAM…VSTGEKNAAT (238 aa)). Cys-37 and Cys-113 form a disulfide bridge. N-linked (GlcNAc...) asparagine glycosylation is found at Asn-70, Asn-137, Asn-173, Asn-186, and Asn-225. The Ig-like C2-type domain occupies 141 to 227 (PVVSAPHSPS…ENVLLQQNLT (87 aa)). An intrachain disulfide couples Cys-158 to Cys-216. Residues 257 to 277 (WSILAVLCLLVVVAVAIGWVC) form a helical membrane-spanning segment. Residues 278–302 (RDRCLQHSYAGAWAVSPETELTGHV) are Cytoplasmic-facing.

Belongs to the immunoglobulin superfamily. BTN/MOG family. As to quaternary structure, interacts with CTLA4 (in vitro). In terms of tissue distribution, expressed on peripheral blood B-cells and monocytes, as well as on monocyte-derived dendritic cells (at protein level). Widely expressed (brain, heart, kidney, liver, lung, pancreas, placenta, skeletal muscle, bone marrow, colon, ovary, prostate, testis, lymph nodes, leukocytes, spleen, thymus and tonsil). As to expression, detected only in lymph nodes, leukocytes and spleen. Expressed on activated monocytes and dendritic cells.

It is found in the cell membrane. Its function is as follows. Ligand for the T-cell-specific cell surface receptor ICOS. Acts as a costimulatory signal for T-cell proliferation and cytokine secretion. Also induces B-cell proliferation and differentiation into plasma cells. Could play an important role in mediating local tissue responses to inflammatory conditions, as well as in modulating the secondary immune response by co-stimulating memory T-cell function. In endothelial cells, required for proper neutrophil transmigration in response to chemoattractants, such as CXCL8/IL8 or N-formyl-methionyl peptides (fMLP). This Homo sapiens (Human) protein is ICOS ligand (ICOSLG).